Reading from the N-terminus, the 588-residue chain is Neuropeptide-like 1 (588 aa).

Positions 1–179 (MQCIPKKTFM…DPEVLEYSPD (179 aa)) are excised as a propeptide. The interval 115-143 (NGDLPITIQERESDNDDEEKRSASSSDNV) is disordered. The residue at position 194 (Thr194) is a Threonine amide. 3 positions are modified to serine amide: Ser210, Ser227, and Ser244. Tyr260 carries the post-translational modification Tyrosine amide. Position 281 is a glutamic acid 1-amide (Glu281). The propeptide occupies 285–299 (SIASLARSGDWPSVA). Tyr318 is subject to Tyrosine amide. The propeptide occupies 321-588 (SLSDDREAPS…SNSHIAPRSM (268 aa)). Positions 342-382 (GNSEGKENEWQATPFTVSEDLDEGKAKNRSNRRIEASQTRH) are disordered.

It localises to the secreted. This Camponotus floridanus (Florida carpenter ant) protein is Neuropeptide-like 1.